Here is a 636-residue protein sequence, read N- to C-terminus: Putative lipase ATG15 (636 aa).

Residues 1–19 (MYKYGTVVDPAMTTNRRSR) are Cytoplasmic-facing. A helical; Signal-anchor for type II membrane protein membrane pass occupies residues 20–42 (LSGFRCASTARVTATLLLSFLAF). The Lumenal portion of the chain corresponds to 43-636 (SPSSASSDFG…DDLEFATDEM (594 aa)). 5 N-linked (GlcNAc...) asparagine glycosylation sites follow: Asn-211, Asn-233, Asn-291, Asn-315, and Asn-477. Residues 478-500 (GTETTTTSSPSTTSTTRTRTRTS) form a disordered region. Residues 479 to 500 (TETTTTSSPSTTSTTRTRTRTS) are compositionally biased toward low complexity.

The protein belongs to the AB hydrolase superfamily. Lipase family. Binds to both phosphatidylinositol (PI) and phosphatidylinositol 3,5-bisphosphate (PIP2).

It is found in the endosome. It localises to the multivesicular body membrane. The protein resides in the prevacuolar compartment membrane. It carries out the reaction a triacylglycerol + H2O = a diacylglycerol + a fatty acid + H(+). In terms of biological role, lipase which is essential for lysis of subvacuolar cytoplasm to vacuole targeted bodies and intravacuolar autophagic bodies. Involved in the lysis of intravacuolar multivesicular body (MVB) vesicles. The intravacuolar membrane disintegration by ATG15 is critical to life span extension. Autophagy is required for proper vegetative growth, asexual/sexual reproduction, and full virulence. Autophagy is particularly involved in the biosynthesis of deoxynivalenol (DON), an important virulence determinant. This chain is Putative lipase ATG15, found in Gibberella zeae (strain ATCC MYA-4620 / CBS 123657 / FGSC 9075 / NRRL 31084 / PH-1) (Wheat head blight fungus).